The primary structure comprises 415 residues: Queuine tRNA-ribosyltransferase accessory subunit 2 (415 aa).

4 residues coordinate Zn(2+): C351, C353, C356, and H382.

This sequence belongs to the queuine tRNA-ribosyltransferase family. QTRT2 subfamily. As to quaternary structure, heterodimer of a catalytic subunit QTRT1 and an accessory subunit QTRT2. Requires Zn(2+) as cofactor.

It localises to the cytoplasm. The protein localises to the mitochondrion outer membrane. Non-catalytic subunit of the queuine tRNA-ribosyltransferase (TGT) that catalyzes the base-exchange of a guanine (G) residue with queuine (Q) at position 34 (anticodon wobble position) in tRNAs with GU(N) anticodons (tRNA-Asp, -Asn, -His and -Tyr), resulting in the hypermodified nucleoside queuosine (7-(((4,5-cis-dihydroxy-2-cyclopenten-1-yl)amino)methyl)-7-deazaguanosine). The polypeptide is Queuine tRNA-ribosyltransferase accessory subunit 2 (Homo sapiens (Human)).